A 280-amino-acid chain; its full sequence is 1-cyclohexenylcarbonyl-CoA reductase (280 aa).

Residues Ser22–Ile25, Asp71–Val72, and Asn98 each bind NADP(+). Residues Tyr158 and Lys165 each act as proton acceptor in the active site. Residues Lys165 and Ile194–Ser196 each bind NADP(+).

It belongs to the short-chain dehydrogenases/reductases (SDR) family. Homodimer.

The catalysed reaction is (4R,5R)-4,5-dihydroxycyclohex-2-ene-1-carbonyl-CoA + NADP(+) = (3R,4R)-3,4-dihydroxycyclohexa-1,5-diene-1-carbonyl-CoA + NADPH + H(+). It carries out the reaction (3S)-3-hydroxycyclohexane-1-carbonyl-CoA + NADP(+) = (5S)-5-hydroxycyclohex-1-ene-1-carbonyl-CoA + NADPH + H(+). It catalyses the reaction cyclohexane-1-carbonyl-CoA + NADP(+) = cyclohex-1-ene-1-carbonyl-CoA + NADPH + H(+). Its pathway is antibiotic biosynthesis. Inhibited by the thiol inhibitors p-chloromercuribenzoate, N-ethylmaleimide and iodoacetamide. Also inhibited by various divalent cations. Its function is as follows. Involved in the biosynthesis of the antifungal antibiotic ansatrienin A (mycotrienin I). Catalyzes three of the reductive steps involved in the formation of the cyclohexanecarboxylic acid (CHC) moiety of ansatrienin from shikimic acid. Can use 3,4-dihydroxycyclohexa-1,5-diene-1-carbonyl-CoA, 5-hydroxycyclohex-1-ene-1-carbonyl-CoA and cyclohex-1-ene-1-carbonyl-CoA as substrates. The chain is 1-cyclohexenylcarbonyl-CoA reductase from Streptomyces collinus.